The sequence spans 273 residues: Ribosomal RNA small subunit methyltransferase A (273 aa).

S-adenosyl-L-methionine contacts are provided by N18, L20, G45, E66, D91, and N113.

It belongs to the class I-like SAM-binding methyltransferase superfamily. rRNA adenine N(6)-methyltransferase family. RsmA subfamily.

The protein localises to the cytoplasm. It carries out the reaction adenosine(1518)/adenosine(1519) in 16S rRNA + 4 S-adenosyl-L-methionine = N(6)-dimethyladenosine(1518)/N(6)-dimethyladenosine(1519) in 16S rRNA + 4 S-adenosyl-L-homocysteine + 4 H(+). Its function is as follows. Specifically dimethylates two adjacent adenosines (A1518 and A1519) in the loop of a conserved hairpin near the 3'-end of 16S rRNA in the 30S particle. May play a critical role in biogenesis of 30S subunits. This chain is Ribosomal RNA small subunit methyltransferase A, found in Shigella flexneri.